Here is a 242-residue protein sequence, read N- to C-terminus: Lactate utilization protein A 2 (242 aa).

Belongs to the LutA/YkgE family.

Functionally, is involved in L-lactate degradation and allows cells to grow with lactate as the sole carbon source. The chain is Lactate utilization protein A 2 from Bacillus cereus (strain AH820).